The sequence spans 131 residues: Large-conductance mechanosensitive channel (131 aa).

3 consecutive transmembrane segments (helical) span residues Phe8–Gly28, Ile30–Ile50, and Gly67–Val87.

This sequence belongs to the MscL family. Homopentamer.

It is found in the cell membrane. In terms of biological role, channel that opens in response to stretch forces in the membrane lipid bilayer. May participate in the regulation of osmotic pressure changes within the cell. The protein is Large-conductance mechanosensitive channel of Anoxybacillus flavithermus (strain DSM 21510 / WK1).